The following is a 331-amino-acid chain: MVSYKEAGVNIEEGYKSVDLIKKHASKTFTKGVLNNLGSFAGMFELPKYKNPVLVSGTDGVGTKLDIAFRMKKYNTVGIDCVAMCVNDILCHGAKPLFFLDYIACGKLEAEVAAQLVEGVSNGCIQSECALIGGETAEMPGFYRDGEYDIAGFAVGVAEKDEIIDGSKIEDGDVLIGIASSGPHSNGYSLIRKIVEDLHKDFAGDKIGNTLLTPTKIYVKPVMKLLEKYNIKGMAHVTGGGFYENIPRMFKEDFTAVINKKSYPVPNIFNHLMNLGVEEDHMYNTFNMGIGFVLCVNEKDGENIIKDLIEMGEKGYKIGYVKKGDKSVELI.

It belongs to the AIR synthase family.

The protein localises to the cytoplasm. It catalyses the reaction 2-formamido-N(1)-(5-O-phospho-beta-D-ribosyl)acetamidine + ATP = 5-amino-1-(5-phospho-beta-D-ribosyl)imidazole + ADP + phosphate + H(+). Its pathway is purine metabolism; IMP biosynthesis via de novo pathway; 5-amino-1-(5-phospho-D-ribosyl)imidazole from N(2)-formyl-N(1)-(5-phospho-D-ribosyl)glycinamide: step 2/2. The polypeptide is Phosphoribosylformylglycinamidine cyclo-ligase (Clostridium botulinum (strain 657 / Type Ba4)).